The primary structure comprises 815 residues: Kinesin heavy chain (815 aa).

Positions 11–329 (GVQVFCRIRP…LLFGARAKTI (319 aa)) constitute a Kinesin motor domain. ATP is bound at residue 88 to 95 (GQTSSGKT). Coiled coils occupy residues 335–374 (INEE…RWRA), 422–554 (PITD…LDEC), and 695–785 (PAQK…RMNA). Residues 788 to 815 (IVKPIRPGQVYTSPSAGMSQGAPNGSNA) form a disordered region. Polar residues predominate over residues 797 to 815 (VYTSPSAGMSQGAPNGSNA).

Belongs to the TRAFAC class myosin-kinesin ATPase superfamily. Kinesin family. Kinesin subfamily. Oligomer composed of two heavy chains and two light chains.

The protein resides in the cytoplasm. It is found in the cytoskeleton. Functionally, microtubule-dependent motor protein required for organelle transport. Plays a role in endosome transport. Required for the transport of mitochondria along the axon of motor neurons. Involved in the nuclear migration of hyp7 hypodermal precursor cells. Required for the formation of dendritic branches of PVD sensory neurons. In non-ciliated neurons such as the PVD and PHC neurons, required for the organization of minus-end out microtubules in dendrites. Also required for the minus-end out orientation of microtubules in dendrites of AQR gas-sensing neurons. Involved in the localization of unc-33 to neurites. Positively regulates cilium position and dendrite morphogenesis in the postembryonic AQR and PQR gas-sensing neurons. Plays a more prominent role in regulating dendrite morphogenesis in AQR than in PQR neurons. Plays a role in regulating the localization of grdn-1 to the distal dendrites of AQR sensory neurons. In Caenorhabditis elegans, this protein is Kinesin heavy chain.